The sequence spans 126 residues: Protein ApaG (126 aa).

An ApaG domain is found at 2 to 126 (ADKLYQMEVQ…MTLVAPRVLH (125 aa)).

In Chromobacterium violaceum (strain ATCC 12472 / DSM 30191 / JCM 1249 / CCUG 213 / NBRC 12614 / NCIMB 9131 / NCTC 9757 / MK), this protein is Protein ApaG.